The chain runs to 273 residues: Dermonecrotic toxin SdSicTox-betaIF1 (273 aa).

H5 is a catalytic residue. E25 and D27 together coordinate Mg(2+). Residue H41 is the Nucleophile of the active site. 2 disulfides stabilise this stretch: C45-C51 and C47-C189.

Belongs to the arthropod phospholipase D family. Class II subfamily. It depends on Mg(2+) as a cofactor. In terms of tissue distribution, expressed by the venom gland.

It localises to the secreted. It catalyses the reaction an N-(acyl)-sphingosylphosphocholine = an N-(acyl)-sphingosyl-1,3-cyclic phosphate + choline. The enzyme catalyses an N-(acyl)-sphingosylphosphoethanolamine = an N-(acyl)-sphingosyl-1,3-cyclic phosphate + ethanolamine. The catalysed reaction is a 1-acyl-sn-glycero-3-phosphocholine = a 1-acyl-sn-glycero-2,3-cyclic phosphate + choline. It carries out the reaction a 1-acyl-sn-glycero-3-phosphoethanolamine = a 1-acyl-sn-glycero-2,3-cyclic phosphate + ethanolamine. Functionally, dermonecrotic toxins cleave the phosphodiester linkage between the phosphate and headgroup of certain phospholipids (sphingolipid and lysolipid substrates), forming an alcohol (often choline) and a cyclic phosphate. This toxin acts on sphingomyelin (SM). It may also act on ceramide phosphoethanolamine (CPE), lysophosphatidylcholine (LPC) and lysophosphatidylethanolamine (LPE), but not on lysophosphatidylserine (LPS), and lysophosphatidylglycerol (LPG). It acts by transphosphatidylation, releasing exclusively cyclic phosphate products as second products. Induces dermonecrosis, hemolysis, increased vascular permeability, edema, inflammatory response, and platelet aggregation. In Sicarius cf. damarensis (strain GJB-2008) (Six-eyed sand spider), this protein is Dermonecrotic toxin SdSicTox-betaIF1.